A 74-amino-acid polypeptide reads, in one-letter code: Anionic peptide clone 8 (74 aa).

An N-terminal signal peptide occupies residues 1-24 (MVSKSLIVLLLVSVLVSTFFTTEA).

The protein belongs to the non-disulfide-bridged peptide (NDBP) superfamily. Long chain multifunctional peptide (group 2) family. In terms of tissue distribution, expressed by the venom gland.

It localises to the secreted. Its function is as follows. May be an antimicrobial peptide. The chain is Anionic peptide clone 8 from Tityus costatus (Brazilian scorpion).